A 91-amino-acid polypeptide reads, in one-letter code: Acylphosphatase (91 aa).

Residues 3-91 (TVTMRVTGLV…EKFTRFSVVY (89 aa)) form the Acylphosphatase-like domain. Residues Arg-18 and Asn-36 contribute to the active site.

This sequence belongs to the acylphosphatase family.

It carries out the reaction an acyl phosphate + H2O = a carboxylate + phosphate + H(+). The protein is Acylphosphatase (acyP) of Lactobacillus johnsonii (strain CNCM I-12250 / La1 / NCC 533).